A 134-amino-acid chain; its full sequence is U35-theraphotoxin-Cg1a (134 aa).

The first 18 residues, 1–18 (MLVTLLETFSVVFQVANG), serve as a signal peptide directing secretion. Residues 19–56 (DGNCVPRFQDDVEFCDNYILEAVTEASKMIAPRAREQK) constitute a propeptide that is removed on maturation.

In terms of tissue distribution, expressed by the venom gland.

It is found in the secreted. In terms of biological role, probable secreted venom toxin. The chain is U35-theraphotoxin-Cg1a from Chilobrachys guangxiensis (Chinese earth tiger tarantula).